We begin with the raw amino-acid sequence, 131 residues long: Probable calcium-binding protein CML34 (131 aa).

4 EF-hand domains span residues 1–33, 34–69, 70–97, and 98–131; these read MSAKRVFEKFDKNKDGKLSLDEFREVALAFSPY, FTQEDIVKFFEEIDVDGNGELNADEFTSCIEKMLKE, VFVFCDVDGDGKIPASESYVTMTSLGKK, and FTEETSAEKVRAADVDGDGYLNFDEFMALVIGDI. Asp11, Asn13, Asp15, Lys17, Glu22, Asp47, Asp49, Asn51, Glu53, and Glu58 together coordinate Ca(2+). Ca(2+)-binding residues include Asp111, Asp113, Asp115, Tyr117, and Glu122.

Functionally, potential calcium sensor. In Arabidopsis thaliana (Mouse-ear cress), this protein is Probable calcium-binding protein CML34 (CML34).